The sequence spans 637 residues: 1-deoxy-D-xylulose-5-phosphate synthase (637 aa).

Residues histidine 71 and 112 to 114 contribute to the thiamine diphosphate site; that span reads SHA. Aspartate 144 is a binding site for Mg(2+). Residues 145–146, asparagine 173, tyrosine 284, and glutamate 365 each bind thiamine diphosphate; that span reads GA. Asparagine 173 lines the Mg(2+) pocket.

The protein belongs to the transketolase family. DXPS subfamily. Homodimer. The cofactor is Mg(2+). Thiamine diphosphate is required as a cofactor.

It carries out the reaction D-glyceraldehyde 3-phosphate + pyruvate + H(+) = 1-deoxy-D-xylulose 5-phosphate + CO2. Its pathway is metabolic intermediate biosynthesis; 1-deoxy-D-xylulose 5-phosphate biosynthesis; 1-deoxy-D-xylulose 5-phosphate from D-glyceraldehyde 3-phosphate and pyruvate: step 1/1. Catalyzes the acyloin condensation reaction between C atoms 2 and 3 of pyruvate and glyceraldehyde 3-phosphate to yield 1-deoxy-D-xylulose-5-phosphate (DXP). The chain is 1-deoxy-D-xylulose-5-phosphate synthase from Mycolicibacterium vanbaalenii (strain DSM 7251 / JCM 13017 / BCRC 16820 / KCTC 9966 / NRRL B-24157 / PYR-1) (Mycobacterium vanbaalenii).